Reading from the N-terminus, the 157-residue chain is S-ribosylhomocysteine lyase (157 aa).

Fe cation-binding residues include His-54, His-58, and Cys-126.

The protein belongs to the LuxS family. Homodimer. It depends on Fe cation as a cofactor.

It catalyses the reaction S-(5-deoxy-D-ribos-5-yl)-L-homocysteine = (S)-4,5-dihydroxypentane-2,3-dione + L-homocysteine. Functionally, involved in the synthesis of autoinducer 2 (AI-2) which is secreted by bacteria and is used to communicate both the cell density and the metabolic potential of the environment. The regulation of gene expression in response to changes in cell density is called quorum sensing. Catalyzes the transformation of S-ribosylhomocysteine (RHC) to homocysteine (HC) and 4,5-dihydroxy-2,3-pentadione (DPD). The sequence is that of S-ribosylhomocysteine lyase from Bacillus cytotoxicus (strain DSM 22905 / CIP 110041 / 391-98 / NVH 391-98).